Reading from the N-terminus, the 473-residue chain is GTPase Der (473 aa).

EngA-type G domains lie at 5–170 and 178–351; these read PVVA…PEDV and LKLA…ASSM. GTP contacts are provided by residues 11–18, 58–62, 123–126, 184–191, 231–235, and 296–299; these read GRPNVGKS, DTGGI, NKID, DTAGV, and NKWD. Positions 352–436 constitute a KH-like domain; sequence FKVSTNRLTQ…PLKVEFKLNT (85 aa). Positions 438–473 are disordered; it reads PYAGKKTTSSKKLRPGVSEARQKRRNMKYKKGSHKK. A compositionally biased stretch (basic residues) spans 459-473; the sequence is QKRRNMKYKKGSHKK.

This sequence belongs to the TRAFAC class TrmE-Era-EngA-EngB-Septin-like GTPase superfamily. EngA (Der) GTPase family. Associates with the 50S ribosomal subunit.

Its function is as follows. GTPase that plays an essential role in the late steps of ribosome biogenesis. In Psychrobacter sp. (strain PRwf-1), this protein is GTPase Der.